We begin with the raw amino-acid sequence, 288 residues long: Pyridoxal kinase PdxY (288 aa).

Residues serine 12 and 47–48 each bind substrate; that span reads TQ. ATP contacts are provided by residues aspartate 114, glutamate 151, lysine 184, and 211–214; that span reads RPLL. Residue aspartate 225 coordinates substrate.

This sequence belongs to the pyridoxine kinase family. PdxY subfamily. In terms of assembly, homodimer. Requires Mg(2+) as cofactor.

The catalysed reaction is pyridoxal + ATP = pyridoxal 5'-phosphate + ADP + H(+). It functions in the pathway cofactor metabolism; pyridoxal 5'-phosphate salvage; pyridoxal 5'-phosphate from pyridoxal: step 1/1. Pyridoxal kinase involved in the salvage pathway of pyridoxal 5'-phosphate (PLP). Catalyzes the phosphorylation of pyridoxal to PLP. This Pseudomonas paraeruginosa (strain DSM 24068 / PA7) (Pseudomonas aeruginosa (strain PA7)) protein is Pyridoxal kinase PdxY.